Here is a 359-residue protein sequence, read N- to C-terminus: 4-hydroxyproline 2-epimerase (359 aa).

The active-site Proton acceptor is Cys126. Substrate contacts are provided by residues 127–128 (GH), His248, and Asp274. Residue Cys278 is the Proton donor of the active site. Residue 279–280 (GT) coordinates substrate.

The protein belongs to the proline racemase family.

The catalysed reaction is trans-4-hydroxy-L-proline = cis-4-hydroxy-D-proline. Its function is as follows. Catalyzes the epimerization of trans-4-hydroxy-L-proline (t4LHyp) to cis-4-hydroxy-D-proline (c4DHyp). Is likely involved in a degradation pathway that converts t4LHyp to alpha-ketoglutarate. Displays no proline racemase activity. This chain is 4-hydroxyproline 2-epimerase, found in Planctopirus limnophila (strain ATCC 43296 / DSM 3776 / IFAM 1008 / Mu 290) (Planctomyces limnophilus).